We begin with the raw amino-acid sequence, 154 residues long: GTP-dependent dephospho-CoA kinase (154 aa).

Residues Asp-34, Asp-53, and Glu-107 each contribute to the GTP site.

The protein belongs to the GTP-dependent DPCK family.

It carries out the reaction 3'-dephospho-CoA + GTP = GDP + CoA + H(+). Its pathway is cofactor biosynthesis; coenzyme A biosynthesis. Functionally, catalyzes the GTP-dependent phosphorylation of the 3'-hydroxyl group of dephosphocoenzyme A to form coenzyme A (CoA). The chain is GTP-dependent dephospho-CoA kinase from Nitrosopumilus maritimus (strain SCM1).